Reading from the N-terminus, the 438-residue chain is Adenosylhomocysteinase (438 aa).

Substrate-binding residues include Thr61, Asp137, and Glu162. 163 to 165 (TTT) lines the NAD(+) pocket. Lys192 and Asp196 together coordinate substrate. NAD(+) contacts are provided by residues Asn197, 226-231 (GYGDVG), Glu249, Asn284, 305-307 (IGH), and Asn352.

The protein belongs to the adenosylhomocysteinase family. NAD(+) serves as cofactor.

The protein resides in the cytoplasm. The catalysed reaction is S-adenosyl-L-homocysteine + H2O = L-homocysteine + adenosine. Its pathway is amino-acid biosynthesis; L-homocysteine biosynthesis; L-homocysteine from S-adenosyl-L-homocysteine: step 1/1. Its function is as follows. May play a key role in the regulation of the intracellular concentration of adenosylhomocysteine. This chain is Adenosylhomocysteinase, found in Flavobacterium psychrophilum (strain ATCC 49511 / DSM 21280 / CIP 103535 / JIP02/86).